Here is a 1102-residue protein sequence, read N- to C-terminus: Endocytosis protein end4 (1102 aa).

Residues aspartate 9–asparagine 139 enclose the ENTH domain. The tract at residues proline 265–tryptophan 334 is disordered. A compositionally biased stretch (polar residues) spans threonine 292–serine 305. Residues threonine 338–glutamine 661 adopt a coiled-coil conformation. The 243-residue stretch at leucine 858–alanine 1100 folds into the I/LWEQ domain.

The protein belongs to the SLA2 family.

Its subcellular location is the cytoplasm. The protein resides in the cytoskeleton. In terms of biological role, required for cellular morphogenesis and polarization of the cortical cytoskeleton. Required for establishment of new polarized growth zones where it acts in actin organization. Involved plasma membrane internalization and is essential for fluid-phase endocytosis. This Schizosaccharomyces pombe (strain 972 / ATCC 24843) (Fission yeast) protein is Endocytosis protein end4 (end4).